A 220-amino-acid chain; its full sequence is Ribonuclease P protein subunit p29 (220 aa).

A Phosphoserine modification is found at Ser10.

The protein belongs to the eukaryotic/archaeal RNase P protein component 1 family. Component of nuclear RNase P and RNase MRP ribonucleoproteins. RNase P consists of a catalytic RNA moiety and 10 different protein chains; POP1, POP4, POP5, POP7, RPP14, RPP21, RPP25, RPP30, RPP38 and RPP40. Within the RNase P complex, POP1, POP7 and RPP25 form the 'finger' subcomplex, POP5, RPP14, RPP40 and homodimeric RPP30 form the 'palm' subcomplex, and RPP21, POP4 and RPP38 form the 'wrist' subcomplex. All subunits of the RNase P complex interact with the catalytic RNA. Several subunits of RNase P are also part of the RNase MRP complex. RNase MRP consists of a catalytic RNA moiety and about 8 protein subunits; POP1, POP7, RPP25, RPP30, RPP38, RPP40 and possibly also POP4 and POP5.

Its subcellular location is the nucleus. It is found in the nucleolus. In terms of biological role, component of ribonuclease P, a ribonucleoprotein complex that generates mature tRNA molecules by cleaving their 5'-ends. The chain is Ribonuclease P protein subunit p29 (POP4) from Pongo abelii (Sumatran orangutan).